Here is a 203-residue protein sequence, read N- to C-terminus: Urease accessory protein UreG (203 aa).

11–18 (GPVGSGKT) is a GTP binding site.

The protein belongs to the SIMIBI class G3E GTPase family. UreG subfamily. In terms of assembly, homodimer. UreD, UreF and UreG form a complex that acts as a GTP-hydrolysis-dependent molecular chaperone, activating the urease apoprotein by helping to assemble the nickel containing metallocenter of UreC. The UreE protein probably delivers the nickel.

Its subcellular location is the cytoplasm. Its function is as follows. Facilitates the functional incorporation of the urease nickel metallocenter. This process requires GTP hydrolysis, probably effectuated by UreG. In Prochlorococcus marinus (strain AS9601), this protein is Urease accessory protein UreG.